The sequence spans 193 residues: dCTP deaminase (193 aa).

DCTP contacts are provided by residues 110–115, Asp128, 136–138, Tyr171, Lys178, and Gln182; these read RSSLAR and VLE. The active-site Proton donor/acceptor is Glu138. The interval 171–193 is disordered; sequence YNKRKNAKYKDQQDAVASRISQD.

Belongs to the dCTP deaminase family. In terms of assembly, homotrimer.

The catalysed reaction is dCTP + H2O + H(+) = dUTP + NH4(+). It functions in the pathway pyrimidine metabolism; dUMP biosynthesis; dUMP from dCTP (dUTP route): step 1/2. Catalyzes the deamination of dCTP to dUTP. In Shewanella oneidensis (strain ATCC 700550 / JCM 31522 / CIP 106686 / LMG 19005 / NCIMB 14063 / MR-1), this protein is dCTP deaminase.